Reading from the N-terminus, the 289-residue chain is Protein SET (289 aa).

The disordered stretch occupies residues 1–45 (MAPKRQSAILPQPKKPRPAAAPKLEDKSASPGLPKGEKEQQEAIE). A2 is subject to N,N,N-trimethylalanine; by NTM1. S7 carries the phosphoserine modification. P11 carries the N6-acetyllysine modification. K15 carries the phosphoserine modification. K23 is subject to N6-acetyllysine. Residue K23 is modified to Phosphothreonine. Residue S28 is modified to Phosphoserine. Residues 31–77 (PGLPKGEKEQQEAIEHIDEVQNEIDRLNEQASEEILKVEQKYNKLRQ) are dimerization. Residues 35-45 (KGEKEQQEAIE) are compositionally biased toward basic and acidic residues. S62 bears the Phosphoserine mark. K67 carries the post-translational modification N6-acetyllysine. Residues 78–224 (PFFQKRSELI…ELGEVIKDDI (147 aa)) form an earmuff domain region. Y145 carries the post-translational modification Phosphotyrosine. Residue K149 is modified to N6-acetyllysine. A Glycyl lysine isopeptide (Lys-Gly) (interchain with G-Cter in ubiquitin) cross-link involves residue K153. Disordered regions lie at residues 157 to 206 (LNES…TWFT) and 235 to 289 (PDMD…GEDD). Residues 168–180 (TEIKWKSGKDLTK) show a composition bias toward basic and acidic residues. Residue K171 is modified to N6-acetyllysine. Positions 236–289 (DMDDEEGEAEDDDDDDEEEEGLEDIDEEGDEDEGEEDDDEDEGEEGEEDEGEDD) are enriched in acidic residues.

The protein belongs to the nucleosome assembly protein (NAP) family. As to quaternary structure, headphone-shaped homodimer. Isoform 1 and isoform 2 interact directly with each other and with ANP32A within the tripartite INHAT (inhibitor of acetyltransferases) complex. Isoform 1 and isoform 2 interact also with histones. Isoform 2 is a omponent of the SET complex, composed of at least ANP32A, APEX1, HMGB2, NME1, SET and TREX1, but not NME2 or TREX2. Within this complex, directly interacts with ANP32A, NME1, HMGB2 and TREX1; the interaction with ANP32A is enhanced after cleavage. Interacts with APBB1, CHTOP, SETBP1, SGO1. Some glutamate residues are glycylated by TTLL8. This modification occurs exclusively on glutamate residues and results in a glycine chain on the gamma-carboxyl group. Post-translationally, N-terminus of isoform 1 is methylated by METTL11A/NTM1. Mainly trimethylated. In terms of processing, cleaved after Lys-176 by GZMA. The cleavage inhibits its nucleosome assembly activity and disrupts the inhibition on NME1.

Its subcellular location is the cytoplasm. It is found in the cytosol. It localises to the endoplasmic reticulum. The protein resides in the nucleus. The protein localises to the nucleoplasm. Its function is as follows. Multitasking protein, involved in apoptosis, transcription, nucleosome assembly and histone chaperoning. Isoform 2 anti-apoptotic activity is mediated by inhibition of the GZMA-activated DNase, NME1. In the course of cytotoxic T-lymphocyte (CTL)-induced apoptosis, GZMA cleaves SET, disrupting its binding to NME1 and releasing NME1 inhibition. Isoform 1 and isoform 2 are potent inhibitors of protein phosphatase 2A. Isoform 1 and isoform 2 inhibit EP300/CREBBP and PCAF-mediated acetylation of histones (HAT) and nucleosomes, most probably by masking the accessibility of lysines of histones to the acetylases. The predominant target for inhibition is histone H4. HAT inhibition leads to silencing of HAT-dependent transcription and prevents active demethylation of DNA. Both isoforms stimulate DNA replication of the adenovirus genome complexed with viral core proteins; however, isoform 2 specific activity is higher. The protein is Protein SET (Set) of Mus musculus (Mouse).